The chain runs to 553 residues: ATP synthase F(1) complex subunit alpha, mitochondrial (553 aa).

The transit peptide at 1 to 43 (MLSVRVAAAVARALPRRAGLVSKNALGSSFVGARNLHASNTRL) directs the protein to the mitochondrion. Phosphoserine occurs at positions 53 and 65. Phosphoserine; alternate is present on S76. Residue S76 is glycosylated (O-linked (GlcNAc) serine; alternate). S106 bears the Phosphoserine mark. Residues K123, K126, and K132 each carry the N6-acetyllysine modification. The residue at position 134 (T134) is a Phosphothreonine. Position 161 is an N6-acetyllysine; alternate (K161). K161 is modified (N6-succinyllysine; alternate). S166 carries the post-translational modification Phosphoserine. The residue at position 167 (K167) is an N6-acetyllysine; alternate. Residue K167 is modified to N6-succinyllysine; alternate. S184 carries the phosphoserine modification. R204 carries the omega-N-methylarginine modification. Positions 215, 217, 218, 219, and 220 each coordinate ATP. T219 serves as a coordination point for Mg(2+). N6-acetyllysine; alternate is present on residues K230 and K239. 2 positions are modified to N6-succinyllysine; alternate: K230 and K239. The residue at position 240 (K240) is an N6-acetyllysine. N6-acetyllysine; alternate occurs at positions 261 and 305. An N6-succinyllysine; alternate mark is found at K261 and K305. A Mg(2+)-binding site is contributed by D312. The residue at position 427 (K427) is an N6-acetyllysine; alternate. An N6-succinyllysine; alternate modification is found at K427. At K434 the chain carries N6-acetyllysine. ATP is bound by residues Q473 and Q475. 2 positions are modified to N6-acetyllysine; alternate: K498 and K506. 2 positions are modified to N6-succinyllysine; alternate: K498 and K506. S521 carries the phosphoserine modification. An N6-acetyllysine; alternate mark is found at K531 and K539. 2 positions are modified to N6-succinyllysine; alternate: K531 and K539. K541 carries the post-translational modification N6-acetyllysine.

Belongs to the ATPase alpha/beta chains family. Homotrimer. Component of the ATP synthase complex composed at least of ATP5F1A/subunit alpha, ATP5F1B/subunit beta, ATP5MC1/subunit c (homooctomer), MT-ATP6/subunit a, MT-ATP8/subunit 8, ATP5ME/subunit e, ATP5MF/subunit f, ATP5MG/subunit g, ATP5MK/subunit k, ATP5MJ/subunit j, ATP5F1C/subunit gamma, ATP5F1D/subunit delta, ATP5F1E/subunit epsilon, ATP5PF/subunit F6, ATP5PB/subunit b, ATP5PD/subunit d, ATP5PO/subunit OSCP. ATP synthase complex consists of a soluble F(1) head domain (subunits alpha(3) and beta(3)) - the catalytic core - and a membrane F(0) domain - the membrane proton channel (subunits c, a, 8, e, f, g, k and j). These two domains are linked by a central stalk (subunits gamma, delta, and epsilon) rotating inside the F1 region and a stationary peripheral stalk (subunits F6, b, d, and OSCP). Interacts with ATPAF2. Interacts with HRG; the interaction occurs on the surface of T-cells and alters the cell morphology when associated with concanavalin (in vitro). Interacts with PLG (angiostatin peptide); the interaction inhibits most of the angiogenic properties of angiostatin. Interacts with BLOC1S1. Interacts with BCL2L1 isoform BCL-X(L); the interaction mediates the association of BCL2L1 isoform BCL-X(L) with the mitochondrial membrane F(1)F(0) ATP synthase and enhances neurons metabolic efficiency. Interacts with CLN5 and PPT1. Interacts with S100A1; this interaction increases F1-ATPase activity. Interacts with ABCB7; this interaction allows the regulation of cellular iron homeostasis and cellular reactive oxygen species (ROS) levels in cardiomyocytes. In terms of processing, acetylated on lysine residues. BLOC1S1 is required for acetylation. Acetylation of Lys-132, Lys-230 and Lys-498 is observed in liver mitochondria from fasted mice but not from fed mice.

The protein resides in the mitochondrion inner membrane. The protein localises to the cell membrane. In terms of biological role, subunit alpha, of the mitochondrial membrane ATP synthase complex (F(1)F(0) ATP synthase or Complex V) that produces ATP from ADP in the presence of a proton gradient across the membrane which is generated by electron transport complexes of the respiratory chain. ATP synthase complex consist of a soluble F(1) head domain - the catalytic core - and a membrane F(1) domain - the membrane proton channel. These two domains are linked by a central stalk rotating inside the F(1) region and a stationary peripheral stalk. During catalysis, ATP synthesis in the catalytic domain of F(1) is coupled via a rotary mechanism of the central stalk subunits to proton translocation. In vivo, can only synthesize ATP although its ATP hydrolase activity can be activated artificially in vitro. With the catalytic subunit beta (ATP5F1B), forms the catalytic core in the F(1) domain. Subunit alpha does not bear the catalytic high-affinity ATP-binding sites. This is ATP synthase F(1) complex subunit alpha, mitochondrial from Mus musculus (Mouse).